Reading from the N-terminus, the 609-residue chain is Leukotriene A-4 hydrolase (609 aa).

A peptide-binding positions include 131–133 (QCQ) and 263–268 (PYGGME). Zn(2+) is bound at residue H292. E293 acts as the Proton acceptor in catalysis. Zn(2+) is bound by residues H296 and E315. Y380 acts as the Proton donor in catalysis. 560 to 562 (RMK) provides a ligand contact to a peptide.

The protein belongs to the peptidase M1 family. Homodimer. Requires Zn(2+) as cofactor. In terms of tissue distribution, expressed in oocytes.

It is found in the cytoplasm. The catalysed reaction is Release of the N-terminal residue from a tripeptide.. It carries out the reaction leukotriene A4 + H2O = leukotriene B4. It participates in lipid metabolism; leukotriene B4 biosynthesis. Its activity is regulated as follows. The epoxide hydrolase activity is mildly restrained by suicide inactivation, possibly involving binding of LTA4 to Tyr-380. Functionally, bifunctional zinc metalloenzyme that comprises both epoxide hydrolase (EH) and aminopeptidase activities. Acts as an epoxide hydrolase to catalyze the conversion of leukotriene A4 (LTA4) to the pro-inflammatory mediator leukotriene B4 (LTB4). During the conversion of LTA4 to LTB4, a second product is formed, the isomeric delta6-trans-delta8-cis-LTB4 (5S,12R-dihydroxy-6,10-trans-8,14-cis-eicosatetraenoic acid), with a relative formation of 10% delta6-trans-delta8-cis-LTB4 compared to 90% LTB4. The production of delta6-trans-delta8-cis-LTB4 seems to depend on the phenylalanine residue at position 375. Also has aminopeptidase activity. The chain is Leukotriene A-4 hydrolase from Xenopus laevis (African clawed frog).